A 428-amino-acid chain; its full sequence is Glutamyl-tRNA reductase (428 aa).

Substrate-binding positions include 49–52 (TCNR), serine 109, 114–116 (EGQ), and glutamine 120. Catalysis depends on cysteine 50, which acts as the Nucleophile. NADP(+) is bound at residue 189–194 (GAGKMS).

This sequence belongs to the glutamyl-tRNA reductase family. In terms of assembly, homodimer.

The catalysed reaction is (S)-4-amino-5-oxopentanoate + tRNA(Glu) + NADP(+) = L-glutamyl-tRNA(Glu) + NADPH + H(+). The protein operates within porphyrin-containing compound metabolism; protoporphyrin-IX biosynthesis; 5-aminolevulinate from L-glutamyl-tRNA(Glu): step 1/2. It functions in the pathway porphyrin-containing compound metabolism; chlorophyll biosynthesis. Functionally, catalyzes the NADPH-dependent reduction of glutamyl-tRNA(Glu) to glutamate 1-semialdehyde (GSA). The chain is Glutamyl-tRNA reductase from Trichormus variabilis (strain ATCC 29413 / PCC 7937) (Anabaena variabilis).